The primary structure comprises 152 residues: Adrenodoxin-like protein 2, mitochondrial (152 aa).

The N-terminal 29 residues, 1–29, are a transit peptide targeting the mitochondrion; sequence MLVINSCRAASRLALRSLNLRSPIATRTF. A 2Fe-2S ferredoxin-type domain is found at 41 to 146; it reads VNITFVRANG…GLEVHVPSTI (106 aa). The [2Fe-2S] cluster site is built by Cys80, Cys86, Cys89, and Cys127.

It belongs to the adrenodoxin/putidaredoxin family. The cofactor is [2Fe-2S] cluster.

It localises to the mitochondrion. Required for ecdysteroidogenesis in the prothoracic gland which is necessary for larval to pupal transition. This Drosophila melanogaster (Fruit fly) protein is Adrenodoxin-like protein 2, mitochondrial.